The primary structure comprises 347 residues: MRFSSLIKALQAGESGLRWSQLGQDPDLSGAAALDQALGDQLSFLEAGNVLSASLSDSAVGALLLPDQQDLIDLASQRGIAFAVVSDPRLAFAEALDCLHPRQRPQADIHHTAVIDERAVVGPGTAVAARVCIGAGSRVGADCIVHPGVVIYDDVVIADGCELHANAVLHPGSRLGRRCVVNSNAVVGSEGFGFVPTAKGWRKMPQTGQVVLEDGVEVGCGSTIDRPSVGETRIGAGTKIDNLVQIGHGVSTGRGCAFAAQVGIAGGARIGHGVILAGQVGVANRAVVGDRVMASSKAGIHNDVDAGAVVSGYPAIPHRLWLRCSAAFSKLPELARTVRELKRNTPQ.

H248 (proton acceptor) is an active-site residue.

The protein belongs to the transferase hexapeptide repeat family. LpxD subfamily. In terms of assembly, homotrimer.

It carries out the reaction a UDP-3-O-[(3R)-3-hydroxyacyl]-alpha-D-glucosamine + a (3R)-hydroxyacyl-[ACP] = a UDP-2-N,3-O-bis[(3R)-3-hydroxyacyl]-alpha-D-glucosamine + holo-[ACP] + H(+). The protein operates within bacterial outer membrane biogenesis; LPS lipid A biosynthesis. Functionally, catalyzes the N-acylation of UDP-3-O-acylglucosamine using 3-hydroxyacyl-ACP as the acyl donor. Is involved in the biosynthesis of lipid A, a phosphorylated glycolipid that anchors the lipopolysaccharide to the outer membrane of the cell. In Parasynechococcus marenigrum (strain WH8102), this protein is UDP-3-O-acylglucosamine N-acyltransferase.